A 380-amino-acid polypeptide reads, in one-letter code: Cytochrome b (380 aa).

Helical transmembrane passes span 33 to 53 (FGSL…FLAM), 77 to 98 (WLIR…YMHI), 113 to 133 (WNIG…GYVL), and 178 to 198 (FFAF…LHLL). Residues histidine 83 and histidine 97 each contribute to the heme b site. Residues histidine 182 and histidine 196 each contribute to the heme b site. Residue histidine 201 coordinates a ubiquinone. The next 4 helical transmembrane spans lie at 226-246 (YKDL…ALFA), 288-308 (LGGV…PILH), 320-340 (LTQF…WIGG), and 347-367 (FIII…VLAP).

It belongs to the cytochrome b family. In terms of assembly, the cytochrome bc1 complex contains 3 respiratory subunits (MT-CYB, CYC1 and UQCRFS1), 2 core proteins (UQCRC1 and UQCRC2) and probably 6 low-molecular weight proteins. Heme b serves as cofactor.

It localises to the mitochondrion inner membrane. Functionally, component of the ubiquinol-cytochrome c reductase complex (complex III or cytochrome b-c1 complex) that is part of the mitochondrial respiratory chain. The b-c1 complex mediates electron transfer from ubiquinol to cytochrome c. Contributes to the generation of a proton gradient across the mitochondrial membrane that is then used for ATP synthesis. The polypeptide is Cytochrome b (mt-cyb) (Salmo trutta (Brown trout)).